The chain runs to 584 residues: uncharacterized protein (584 aa).

PbH1 repeat units lie at residues 100–128, 139–161, 173–195, 196–225, 236–266, 313–333, 334–356, 357–382, 406–427, 456–478, and 529–554; these read QENI…RSTH, CSNV…IVSP, SEQI…SITG, CDMV…DIEG, PINV…LIEG, TSDA…IDVR, GKSV…LVYQ, SSDV…GLRA, GGNM…WIAQ, NAGA…YCST, and SAGS…QTNT.

This is an uncharacterized protein from Bacillus subtilis (strain 168).